The chain runs to 96 residues: Large ribosomal subunit protein bL21 (96 aa).

It belongs to the bacterial ribosomal protein bL21 family. In terms of assembly, part of the 50S ribosomal subunit. Contacts protein L20.

This protein binds to 23S rRNA in the presence of protein L20. The polypeptide is Large ribosomal subunit protein bL21 (Hydrogenobaculum sp. (strain Y04AAS1)).